Consider the following 229-residue polypeptide: 7-cyano-7-deazaguanine synthase (229 aa).

Position 7 to 17 (7 to 17) interacts with ATP; the sequence is LSGGLDSTTVL. The Zn(2+) site is built by Cys191, Cys204, Cys207, and Cys210.

Belongs to the QueC family. It depends on Zn(2+) as a cofactor.

The catalysed reaction is 7-carboxy-7-deazaguanine + NH4(+) + ATP = 7-cyano-7-deazaguanine + ADP + phosphate + H2O + H(+). It functions in the pathway purine metabolism; 7-cyano-7-deazaguanine biosynthesis. Its function is as follows. Catalyzes the ATP-dependent conversion of 7-carboxy-7-deazaguanine (CDG) to 7-cyano-7-deazaguanine (preQ(0)). The chain is 7-cyano-7-deazaguanine synthase from Cyanothece sp. (strain PCC 7425 / ATCC 29141).